The primary structure comprises 431 residues: Adenylosuccinate synthetase (431 aa).

GTP contacts are provided by residues 12 to 18 (GDEGKGK) and 40 to 42 (GHT). Residue Asp-13 is the Proton acceptor of the active site. Positions 13 and 40 each coordinate Mg(2+). Residues 13–16 (DEGK), 38–41 (NAGH), Thr-129, Arg-143, Gln-224, Thr-239, and Arg-303 contribute to the IMP site. His-41 functions as the Proton donor in the catalytic mechanism. 299–305 (VTTGRAR) contacts substrate. Residues Arg-305, 331 to 333 (KLD), and 413 to 415 (GVG) contribute to the GTP site.

Belongs to the adenylosuccinate synthetase family. In terms of assembly, homodimer. It depends on Mg(2+) as a cofactor.

Its subcellular location is the cytoplasm. The catalysed reaction is IMP + L-aspartate + GTP = N(6)-(1,2-dicarboxyethyl)-AMP + GDP + phosphate + 2 H(+). Its pathway is purine metabolism; AMP biosynthesis via de novo pathway; AMP from IMP: step 1/2. Functionally, plays an important role in the de novo pathway of purine nucleotide biosynthesis. Catalyzes the first committed step in the biosynthesis of AMP from IMP. The polypeptide is Adenylosuccinate synthetase (Mycobacterium sp. (strain KMS)).